We begin with the raw amino-acid sequence, 428 residues long: D-amino acid dehydrogenase (428 aa).

3–17 (VVILGSGVVGVASAY) contributes to the FAD binding site.

This sequence belongs to the DadA oxidoreductase family. The cofactor is FAD.

The enzyme catalyses a D-alpha-amino acid + A + H2O = a 2-oxocarboxylate + AH2 + NH4(+). It participates in amino-acid degradation; D-alanine degradation; NH(3) and pyruvate from D-alanine: step 1/1. Its function is as follows. Oxidative deamination of D-amino acids. This chain is D-amino acid dehydrogenase, found in Burkholderia cenocepacia (strain ATCC BAA-245 / DSM 16553 / LMG 16656 / NCTC 13227 / J2315 / CF5610) (Burkholderia cepacia (strain J2315)).